The chain runs to 428 residues: Serine--tRNA ligase (428 aa).

231 to 233 serves as a coordination point for L-serine; that stretch reads TAE. Residues 262–264 and Val278 contribute to the ATP site; that span reads RRE. Glu285 lines the L-serine pocket. An ATP-binding site is contributed by 349–352; sequence EVSS. Ser384 contacts L-serine.

This sequence belongs to the class-II aminoacyl-tRNA synthetase family. Type-1 seryl-tRNA synthetase subfamily. In terms of assembly, homodimer. The tRNA molecule binds across the dimer.

The protein localises to the cytoplasm. It catalyses the reaction tRNA(Ser) + L-serine + ATP = L-seryl-tRNA(Ser) + AMP + diphosphate + H(+). The catalysed reaction is tRNA(Sec) + L-serine + ATP = L-seryl-tRNA(Sec) + AMP + diphosphate + H(+). Its pathway is aminoacyl-tRNA biosynthesis; selenocysteinyl-tRNA(Sec) biosynthesis; L-seryl-tRNA(Sec) from L-serine and tRNA(Sec): step 1/1. In terms of biological role, catalyzes the attachment of serine to tRNA(Ser). Is also able to aminoacylate tRNA(Sec) with serine, to form the misacylated tRNA L-seryl-tRNA(Sec), which will be further converted into selenocysteinyl-tRNA(Sec). The sequence is that of Serine--tRNA ligase from Chlamydia trachomatis serovar A (strain ATCC VR-571B / DSM 19440 / HAR-13).